We begin with the raw amino-acid sequence, 151 residues long: MAENSPLKAHNLRPAPGAKTAKTRVGRGEASKGKTAGRGTKGTKARYQVPERFEGGQMPLHMRLPKLKGFKNPFRTEYQVVNLDKLATLYPEGGEVTVADLVAKGAVRNNHLVKVLGQGEISVALQVSVDAVSGSAKEKITAAGGTVTELV.

The tract at residues 1–60 is disordered; the sequence is MAENSPLKAHNLRPAPGAKTAKTRVGRGEASKGKTAGRGTKGTKARYQVPERFEGGQMPL.

It belongs to the universal ribosomal protein uL15 family. In terms of assembly, part of the 50S ribosomal subunit.

Binds to the 23S rRNA. This chain is Large ribosomal subunit protein uL15, found in Streptomyces griseus subsp. griseus (strain JCM 4626 / CBS 651.72 / NBRC 13350 / KCC S-0626 / ISP 5235).